A 207-amino-acid chain; its full sequence is MSMQSTHPPKPEAPRLPPGIPESPSCQRRHTLPASEFRCLTPEDAVSAFEIEREAFISVLGVCPLDLDEIRHFLTLCPELSLGWFEEGCLVAFIIGSLWDKERLMQESLTLHRSGGHIAHLHVLAVHRAFRQQGRGPILLWRYLHHLGSQPAVRRAALMCEDALVPFYERFSFHAVGPCAITVGSLTFTELHCSLRDHPFLRRNSGC.

The segment at 1–28 (MSMQSTHPPKPEAPRLPPGIPESPSCQR) is disordered. T31 carries the phosphothreonine; by PKA modification. Residues 35–202 (SEFRCLTPED…CSLRDHPFLR (168 aa)) form the N-acetyltransferase domain. Position 124 (L124) interacts with substrate. Acetyl-CoA-binding positions include 124–126 (LAV) and 132–137 (QQGRGP). M159 serves as a coordination point for substrate. Position 168 to 170 (168 to 170 (YER)) interacts with acetyl-CoA. S205 bears the Phosphoserine mark.

The protein belongs to the acetyltransferase family. AANAT subfamily. As to quaternary structure, monomer. Interacts with several 14-3-3 proteins, including YWHAB, YWHAE, YWHAG and YWHAZ, preferentially when phosphorylated at Thr-31. Phosphorylation on Ser-205 also allows binding to YWHAZ, but with lower affinity. The interaction with YWHAZ considerably increases affinity for arylalkylamines and acetyl-CoA and protects the enzyme from dephosphorylation and proteasomal degradation. It may also prevent thiol-dependent inactivation. Post-translationally, cAMP-dependent phosphorylation on both N-terminal Thr-31 and C-terminal Ser-205 regulates AANAT activity by promoting interaction with 14-3-3 proteins.

The protein resides in the cytoplasm. The catalysed reaction is a 2-arylethylamine + acetyl-CoA = an N-acetyl-2-arylethylamine + CoA + H(+). It participates in aromatic compound metabolism; melatonin biosynthesis; melatonin from serotonin: step 1/2. Its function is as follows. Controls the night/day rhythm of melatonin production in the pineal gland. Catalyzes the N-acetylation of serotonin into N-acetylserotonin, the penultimate step in the synthesis of melatonin. The sequence is that of Serotonin N-acetyltransferase (AANAT) from Pan troglodytes (Chimpanzee).